A 272-amino-acid polypeptide reads, in one-letter code: Small ribosomal subunit biogenesis GTPase RsgA (272 aa).

In terms of domain architecture, CP-type G spans 56 to 207 (KNILIRPKVA…IIDTPGFSSI (152 aa)). GTP-binding positions include 105–108 (TKAD) and 151–159 (GQSGVGKTT). Positions 230, 235, 237, and 245 each coordinate Zn(2+).

The protein belongs to the TRAFAC class YlqF/YawG GTPase family. RsgA subfamily. Monomer. Associates with 30S ribosomal subunit, binds 16S rRNA. Zn(2+) is required as a cofactor.

It is found in the cytoplasm. In terms of biological role, one of several proteins that assist in the late maturation steps of the functional core of the 30S ribosomal subunit. Helps release RbfA from mature subunits. May play a role in the assembly of ribosomal proteins into the subunit. Circularly permuted GTPase that catalyzes slow GTP hydrolysis, GTPase activity is stimulated by the 30S ribosomal subunit. The sequence is that of Small ribosomal subunit biogenesis GTPase RsgA from Mycoplasmopsis pulmonis (strain UAB CTIP) (Mycoplasma pulmonis).